A 778-amino-acid polypeptide reads, in one-letter code: Pentatricopeptide repeat-containing protein At3g09650, chloroplastic (778 aa).

The N-terminal 65 residues, 1–65, are a transit peptide targeting the chloroplast; sequence MNILRPPTSS…RSASGTANSS (65 aa). 3 PPR repeats span residues 235–269, 270–304, and 305–339; these read DTAA…DCEP, DVLT…GIKV, and CMTT…RRDL. A disordered region spans residues 351-381; it reads LKEKEEEEAEDDEDAFEDDEDSGYSARDEVS. Over residues 355 to 372 the composition is skewed to acidic residues; sequence EEEEAEDDEDAFEDDEDS. PPR repeat units lie at residues 413-443, 451-485, 486-521, 522-556, 557-587, 593-627, and 628-658; these read DSRI…MRRQ, DEVT…GVPA, NRIT…GIEP, DVVS…GIAP, TKIS…MMND, DLIA…GFYP, and NVAT…IKER.

This sequence belongs to the PPR family. P subfamily.

The protein localises to the plastid. It is found in the chloroplast stroma. Involved in the processing of polycistronic chloroplast psbB-psbT-psbH-petB-petD transcript. Could bind RNA. This chain is Pentatricopeptide repeat-containing protein At3g09650, chloroplastic (HCF152), found in Arabidopsis thaliana (Mouse-ear cress).